Reading from the N-terminus, the 444-residue chain is tRNA modification GTPase MnmE (444 aa).

Arginine 21, glutamate 79, and lysine 118 together coordinate (6S)-5-formyl-5,6,7,8-tetrahydrofolate. The TrmE-type G domain occupies glycine 215–lysine 365. Asparagine 225 contacts K(+). Residues asparagine 225–serine 230, serine 244–threonine 250, and aspartate 269–glycine 272 each bind GTP. Position 229 (serine 229) interacts with Mg(2+). Residues serine 244, isoleucine 246, and threonine 249 each coordinate K(+). Mg(2+) is bound at residue threonine 250. Lysine 444 lines the (6S)-5-formyl-5,6,7,8-tetrahydrofolate pocket.

The protein belongs to the TRAFAC class TrmE-Era-EngA-EngB-Septin-like GTPase superfamily. TrmE GTPase family. In terms of assembly, homodimer. Heterotetramer of two MnmE and two MnmG subunits. It depends on K(+) as a cofactor.

It is found in the cytoplasm. Its function is as follows. Exhibits a very high intrinsic GTPase hydrolysis rate. Involved in the addition of a carboxymethylaminomethyl (cmnm) group at the wobble position (U34) of certain tRNAs, forming tRNA-cmnm(5)s(2)U34. This chain is tRNA modification GTPase MnmE, found in Malacoplasma penetrans (strain HF-2) (Mycoplasma penetrans).